The primary structure comprises 98 residues: Cell division topological specificity factor (98 aa).

It belongs to the MinE family.

Its function is as follows. Prevents the cell division inhibition by proteins MinC and MinD at internal division sites while permitting inhibition at polar sites. This ensures cell division at the proper site by restricting the formation of a division septum at the midpoint of the long axis of the cell. The protein is Cell division topological specificity factor of Nitrosomonas eutropha (strain DSM 101675 / C91 / Nm57).